The sequence spans 363 residues: MGPGEALLAGLLVMVLAVALLSNALVLLCCAYSAELRTRASGVLLVNLSLGHLLLAALDMPFTLLGVMRGRTPSAPGACQVIGFLDTFLASNAALSVAALSADQWLAVGFPLRYAGRLRPRYAGLLLGCAWGQSLAFSGAALGCSWLGYSSAFASCSLRLPPEPERPRFAAFTATLHAVGFVLPLAVLCLTSLQVHRVARRHCQRMDTVTMKALALLADLHPSVRQRCLIQQKRRRHRATRKIGIAIATFLICFAPYVMTRLAELVPFVTVNAQWGILSKCLTYSKAVADPFTYSLLRRPFRQVLAGMVHRLLKRTPRPASTHDSSLDVAGMVHQLLKRTPRPASTHNGSVDTENDSCLQQTH.

Over 1-7 the chain is Extracellular; it reads MGPGEAL. Residues 8 to 28 form a helical membrane-spanning segment; sequence LAGLLVMVLAVALLSNALVLL. Topologically, residues 29–47 are cytoplasmic; that stretch reads CCAYSAELRTRASGVLLVN. The helical transmembrane segment at 48 to 68 threads the bilayer; that stretch reads LSLGHLLLAALDMPFTLLGVM. Topologically, residues 69–80 are extracellular; it reads RGRTPSAPGACQ. Cysteines 79 and 156 form a disulfide. A helical transmembrane segment spans residues 81-101; the sequence is VIGFLDTFLASNAALSVAALS. The Cytoplasmic portion of the chain corresponds to 102 to 122; it reads ADQWLAVGFPLRYAGRLRPRY. Residues 123–143 traverse the membrane as a helical segment; the sequence is AGLLLGCAWGQSLAFSGAALG. The Extracellular portion of the chain corresponds to 144-168; it reads CSWLGYSSAFASCSLRLPPEPERPR. The chain crosses the membrane as a helical span at residues 169–189; sequence FAAFTATLHAVGFVLPLAVLC. Topologically, residues 190 to 242 are cytoplasmic; the sequence is LTSLQVHRVARRHCQRMDTVTMKALALLADLHPSVRQRCLIQQKRRRHRATRK. Residues 243–263 form a helical membrane-spanning segment; sequence IGIAIATFLICFAPYVMTRLA. The Extracellular segment spans residues 264–277; that stretch reads ELVPFVTVNAQWGI. Residues 278–297 traverse the membrane as a helical segment; sequence LSKCLTYSKAVADPFTYSLL. Topologically, residues 298–363 are cytoplasmic; the sequence is RRPFRQVLAG…ENDSCLQQTH (66 aa). Residues 340–363 are disordered; the sequence is TPRPASTHNGSVDTENDSCLQQTH. Over residues 343 to 363 the composition is skewed to polar residues; sequence PASTHNGSVDTENDSCLQQTH.

It belongs to the G-protein coupled receptor 1 family. High level of expression in placenta. Expressed throughout the brain at low level. No expression detected in skeletal muscle, lung, heart, liver, pancreas, or kidney.

The protein resides in the cell membrane. In terms of biological role, orphan receptor. Displays a significant level of constitutive activity. Its effect is mediated by G(s)-alpha protein that stimulate adenylate cyclase, resulting in an elevation of intracellular cAMP. This Homo sapiens (Human) protein is G-protein coupled receptor 78 (GPR78).